The primary structure comprises 202 residues: FMN-dependent NADH:quinone oxidoreductase (202 aa).

FMN-binding positions include S10, 16 to 18 (SAS), and 96 to 99 (MWNF).

Belongs to the azoreductase type 1 family. As to quaternary structure, homodimer. FMN is required as a cofactor.

The enzyme catalyses 2 a quinone + NADH + H(+) = 2 a 1,4-benzosemiquinone + NAD(+). It carries out the reaction N,N-dimethyl-1,4-phenylenediamine + anthranilate + 2 NAD(+) = 2-(4-dimethylaminophenyl)diazenylbenzoate + 2 NADH + 2 H(+). Functionally, quinone reductase that provides resistance to thiol-specific stress caused by electrophilic quinones. In terms of biological role, also exhibits azoreductase activity. Catalyzes the reductive cleavage of the azo bond in aromatic azo compounds to the corresponding amines. In Beijerinckia indica subsp. indica (strain ATCC 9039 / DSM 1715 / NCIMB 8712), this protein is FMN-dependent NADH:quinone oxidoreductase.